A 237-amino-acid chain; its full sequence is Phosphoribosylaminoimidazole-succinocarboxamide synthase (237 aa).

It belongs to the SAICAR synthetase family.

The catalysed reaction is 5-amino-1-(5-phospho-D-ribosyl)imidazole-4-carboxylate + L-aspartate + ATP = (2S)-2-[5-amino-1-(5-phospho-beta-D-ribosyl)imidazole-4-carboxamido]succinate + ADP + phosphate + 2 H(+). It participates in purine metabolism; IMP biosynthesis via de novo pathway; 5-amino-1-(5-phospho-D-ribosyl)imidazole-4-carboxamide from 5-amino-1-(5-phospho-D-ribosyl)imidazole-4-carboxylate: step 1/2. This Listeria innocua serovar 6a (strain ATCC BAA-680 / CLIP 11262) protein is Phosphoribosylaminoimidazole-succinocarboxamide synthase.